The chain runs to 196 residues: RNA pyrophosphohydrolase (196 aa).

One can recognise a Nudix hydrolase domain in the interval 6 to 149 (GYRPNVGIVI…KRDVYRKVMK (144 aa)). A Nudix box motif is present at residues 38-59 (GGINDNESAEQAMYRELHEEVG).

Belongs to the Nudix hydrolase family. RppH subfamily. It depends on a divalent metal cation as a cofactor.

Accelerates the degradation of transcripts by removing pyrophosphate from the 5'-end of triphosphorylated RNA, leading to a more labile monophosphorylated state that can stimulate subsequent ribonuclease cleavage. The polypeptide is RNA pyrophosphohydrolase (Haemophilus influenzae (strain PittEE)).